The chain runs to 537 residues: CTP synthase (537 aa).

The segment at Met-1–Leu-269 is amidoligase domain. Residue Ser-15 participates in CTP binding. Ser-15 is a binding site for UTP. Residue Ser-16–Ile-21 participates in ATP binding. Residue Tyr-56 coordinates L-glutamine. Asp-73 is an ATP binding site. Residues Asp-73 and Glu-143 each contribute to the Mg(2+) site. CTP-binding positions include Asp-150–Glu-152, Lys-190–Gln-195, and Lys-226. UTP is bound by residues Lys-190–Gln-195 and Lys-226. In terms of domain architecture, Glutamine amidotransferase type-1 spans Asn-295–Lys-537. Gly-357 lines the L-glutamine pocket. The active-site Nucleophile; for glutamine hydrolysis is the Cys-384. Residues Leu-385–Gln-388, Glu-408, and Arg-465 contribute to the L-glutamine site. Catalysis depends on residues His-510 and Glu-512.

The protein belongs to the CTP synthase family. As to quaternary structure, homotetramer.

The enzyme catalyses UTP + L-glutamine + ATP + H2O = CTP + L-glutamate + ADP + phosphate + 2 H(+). The catalysed reaction is L-glutamine + H2O = L-glutamate + NH4(+). It carries out the reaction UTP + NH4(+) + ATP = CTP + ADP + phosphate + 2 H(+). It participates in pyrimidine metabolism; CTP biosynthesis via de novo pathway; CTP from UDP: step 2/2. Allosterically activated by GTP, when glutamine is the substrate; GTP has no effect on the reaction when ammonia is the substrate. The allosteric effector GTP functions by stabilizing the protein conformation that binds the tetrahedral intermediate(s) formed during glutamine hydrolysis. Inhibited by the product CTP, via allosteric rather than competitive inhibition. Functionally, catalyzes the ATP-dependent amination of UTP to CTP with either L-glutamine or ammonia as the source of nitrogen. Regulates intracellular CTP levels through interactions with the four ribonucleotide triphosphates. In Flavobacterium johnsoniae (strain ATCC 17061 / DSM 2064 / JCM 8514 / BCRC 14874 / CCUG 350202 / NBRC 14942 / NCIMB 11054 / UW101) (Cytophaga johnsonae), this protein is CTP synthase.